Reading from the N-terminus, the 586-residue chain is Eukaryotic translation initiation factor 3 subunit D (586 aa).

The segment at 107–154 is disordered; the sequence is FGRGGGTVFRGRAQRGGAGQRGGRAGFQRVGAGRGQGGDRYYDNRGAR. A compositionally biased stretch (gly residues) spans 108–131; sequence GRGGGTVFRGRAQRGGAGQRGGRA. The tract at residues 301–315 is RNA gate; it reads SLDLVTVNENAADAP. Positions 566-577 are enriched in acidic residues; the sequence is FEEDDEAAEEEQ. The interval 566–586 is disordered; it reads FEEDDEAAEEEQEAKGEVEEA.

It belongs to the eIF-3 subunit D family. As to quaternary structure, component of the eukaryotic translation initiation factor 3 (eIF-3) complex.

Its subcellular location is the cytoplasm. In terms of biological role, mRNA cap-binding component of the eukaryotic translation initiation factor 3 (eIF-3) complex, which is involved in protein synthesis of a specialized repertoire of mRNAs and, together with other initiation factors, stimulates binding of mRNA and methionyl-tRNAi to the 40S ribosome. The eIF-3 complex specifically targets and initiates translation of a subset of mRNAs involved in cell proliferation. In the eIF-3 complex, eif3d specifically recognizes and binds the 7-methylguanosine cap of a subset of mRNAs. The chain is Eukaryotic translation initiation factor 3 subunit D from Emericella nidulans (strain FGSC A4 / ATCC 38163 / CBS 112.46 / NRRL 194 / M139) (Aspergillus nidulans).